Here is a 461-residue protein sequence, read N- to C-terminus: Propionyl-CoA carboxylase regulator (461 aa).

The 55-residue stretch at 11 to 65 (LRELRVKLGLTQKVFAERLGASLPYLNQMENNHRPVSATVVLALAQEFGVDVTKL) folds into the HTH cro/C1-type domain. Residues 22 to 41 (QKVFAERLGASLPYLNQMEN) constitute a DNA-binding region (H-T-H motif).

It belongs to the short-chain fatty acyl-CoA assimilation regulator (ScfR) family.

Its function is as follows. Transcriptional regulator that controls propionyl-CoA assimilation through the methylmalonyl-CoA pathway via regulation of pccB expression. This is Propionyl-CoA carboxylase regulator from Cereibacter sphaeroides (strain ATCC 17023 / DSM 158 / JCM 6121 / CCUG 31486 / LMG 2827 / NBRC 12203 / NCIMB 8253 / ATH 2.4.1.) (Rhodobacter sphaeroides).